Reading from the N-terminus, the 880-residue chain is Leucine--tRNA ligase (880 aa).

The 'HIGH' region signature appears at 46–56 (PYPSGALHMGH). The 'KMSKS' region signature appears at 638-642 (KMSKS). Lys641 contributes to the ATP binding site.

It belongs to the class-I aminoacyl-tRNA synthetase family.

It is found in the cytoplasm. It carries out the reaction tRNA(Leu) + L-leucine + ATP = L-leucyl-tRNA(Leu) + AMP + diphosphate. The chain is Leucine--tRNA ligase from Xanthomonas axonopodis pv. citri (strain 306).